A 346-amino-acid chain; its full sequence is Methylthioribose-1-phosphate isomerase (346 aa).

Substrate-binding positions include Arg-48–Ala-50, Arg-91, and Gln-196. Asp-237 serves as the catalytic Proton donor. Asn-247–Lys-248 provides a ligand contact to substrate.

The protein belongs to the eIF-2B alpha/beta/delta subunits family. MtnA subfamily.

It carries out the reaction 5-(methylsulfanyl)-alpha-D-ribose 1-phosphate = 5-(methylsulfanyl)-D-ribulose 1-phosphate. The protein operates within amino-acid biosynthesis; L-methionine biosynthesis via salvage pathway; L-methionine from S-methyl-5-thio-alpha-D-ribose 1-phosphate: step 1/6. Its function is as follows. Catalyzes the interconversion of methylthioribose-1-phosphate (MTR-1-P) into methylthioribulose-1-phosphate (MTRu-1-P). This chain is Methylthioribose-1-phosphate isomerase, found in Thermosipho melanesiensis (strain DSM 12029 / CIP 104789 / BI429).